The sequence spans 147 residues: Hemoglobin subunit gamma-2 (147 aa).

One can recognise a Globin domain in the interval 3-147; the sequence is HFTEEDKATI…VASALSSRYH (145 aa). Thr13 is subject to Phosphothreonine. Residues Ser45, Ser51, and Ser53 each carry the phosphoserine modification. An N6-acetyllysine modification is found at Lys60. His64 lines the heme b pocket. Lys83 carries the post-translational modification N6-acetyllysine. His93 lines the heme b pocket. Cys94 carries the S-nitrosocysteine modification. Phosphoserine occurs at positions 140, 143, and 144.

It belongs to the globin family. In terms of assembly, heterotetramer of two alpha chains and two gamma chains in fetal hemoglobin (Hb F). In terms of tissue distribution, red blood cells.

In terms of biological role, gamma chains make up the fetal hemoglobin F, in combination with alpha chains. This Gorilla gorilla gorilla (Western lowland gorilla) protein is Hemoglobin subunit gamma-2 (HBG2).